The sequence spans 412 residues: NFATC2-interacting protein (412 aa).

The disordered stretch occupies residues 1–38 (MAEPLRGRGPRSRGGRGARRARGARGRCPRARQSPARL). Residues 8-30 (RGPRSRGGRGARRARGARGRCPR) show a composition bias toward basic residues. 5 positions are modified to phosphoserine: Ser-49, Ser-51, Ser-79, Ser-81, and Ser-83. The disordered stretch occupies residues 58–115 (VADPVEVPVARLPAPAKPEQDSDSDSEGAAEGPAGAPRTLVRRRRRRLLDPGEAPVVP). Residues 86 to 96 (AAEGPAGAPRT) show a composition bias toward low complexity. Ser-118 is subject to Phosphoserine. Residue Lys-120 forms a Glycyl lysine isopeptide (Lys-Gly) (interchain with G-Cter in SUMO2) linkage. Residues 136–206 (KLCPSEPEDE…SSRNKSRKHT (71 aa)) are disordered. Residues 168–227 (RKKLRKKCEKEEKKMEEFPDQDISPLPQPSSRNKSRKHTEALQKLREVNKRLQDLRSCLS) are a coiled coil. Basic and acidic residues predominate over residues 175-184 (CEKEEKKMEE). Ser-191, Ser-197, and Ser-307 each carry phosphoserine. Phosphothreonine is present on residues Thr-309 and Thr-311. The Ubiquitin-like domain occupies 341–412 (LRLRVQGKEK…ESGDLIEVWG (72 aa)). Phosphoserine occurs at positions 362 and 383.

As to quaternary structure, interacts with NFATC2, TRAF1, TRAF2 and PRMT1. Interacts with UBE2I/UBC9. In terms of processing, methylation at the N-terminus by PRMT1 modulates interaction with the NFAT complex and results in augmented cytokine production. As to expression, highest level detected in spleen, thymus and testis.

Its subcellular location is the nucleus. It localises to the cytoplasm. In terms of biological role, in T-helper 2 (Th2) cells, regulates the magnitude of NFAT-driven transcription of a specific subset of cytokine genes, including IL3, IL4, IL5 and IL13, but not IL2. Recruits PRMT1 to the IL4 promoter; this leads to enhancement of histone H4 'Arg-3'-methylation and facilitates subsequent histone acetylation at the IL4 locus, thus promotes robust cytokine expression. Down-regulates formation of poly-SUMO chains by UBE2I/UBC9. The chain is NFATC2-interacting protein (Nfatc2ip) from Mus musculus (Mouse).